The primary structure comprises 476 residues: Eukaryotic translation initiation factor 3 subunit L (476 aa).

Residues 257-452 (DAIRMFSHIL…DLDYALENDL (196 aa)) form the PCI domain.

Belongs to the eIF-3 subunit L family. Component of the eukaryotic translation initiation factor 3 (eIF-3) complex.

Its subcellular location is the cytoplasm. Its function is as follows. Component of the eukaryotic translation initiation factor 3 (eIF-3) complex, which is involved in protein synthesis of a specialized repertoire of mRNAs and, together with other initiation factors, stimulates binding of mRNA and methionyl-tRNAi to the 40S ribosome. The eIF-3 complex specifically targets and initiates translation of a subset of mRNAs involved in cell proliferation. The polypeptide is Eukaryotic translation initiation factor 3 subunit L (Neosartorya fischeri (strain ATCC 1020 / DSM 3700 / CBS 544.65 / FGSC A1164 / JCM 1740 / NRRL 181 / WB 181) (Aspergillus fischerianus)).